Consider the following 213-residue polypeptide: Orotate phosphoribosyltransferase (213 aa).

K26 contributes to the 5-phospho-alpha-D-ribose 1-diphosphate binding site. 34-35 (FF) is a binding site for orotate. 5-phospho-alpha-D-ribose 1-diphosphate contacts are provided by residues 72–73 (YK), R99, K100, K103, H105, and 124–132 (DDVITAGTA). Orotate contacts are provided by T128 and R156.

Belongs to the purine/pyrimidine phosphoribosyltransferase family. PyrE subfamily. In terms of assembly, homodimer. The cofactor is Mg(2+).

It carries out the reaction orotidine 5'-phosphate + diphosphate = orotate + 5-phospho-alpha-D-ribose 1-diphosphate. The protein operates within pyrimidine metabolism; UMP biosynthesis via de novo pathway; UMP from orotate: step 1/2. Functionally, catalyzes the transfer of a ribosyl phosphate group from 5-phosphoribose 1-diphosphate to orotate, leading to the formation of orotidine monophosphate (OMP). In Haemophilus influenzae (strain 86-028NP), this protein is Orotate phosphoribosyltransferase.